The primary structure comprises 243 residues: Pyridoxine 5'-phosphate synthase (243 aa).

3-amino-2-oxopropyl phosphate is bound at residue Asn-9. A 1-deoxy-D-xylulose 5-phosphate-binding site is contributed by 11–12 (DH). Arg-20 is a binding site for 3-amino-2-oxopropyl phosphate. The active-site Proton acceptor is the His-45. Residues Arg-47 and His-52 each coordinate 1-deoxy-D-xylulose 5-phosphate. Glu-72 (proton acceptor) is an active-site residue. Residue Thr-102 coordinates 1-deoxy-D-xylulose 5-phosphate. His-193 functions as the Proton donor in the catalytic mechanism. 3-amino-2-oxopropyl phosphate-binding positions include Gly-194 and 215-216 (GH).

This sequence belongs to the PNP synthase family. Homooctamer; tetramer of dimers.

The protein localises to the cytoplasm. It carries out the reaction 3-amino-2-oxopropyl phosphate + 1-deoxy-D-xylulose 5-phosphate = pyridoxine 5'-phosphate + phosphate + 2 H2O + H(+). It participates in cofactor biosynthesis; pyridoxine 5'-phosphate biosynthesis; pyridoxine 5'-phosphate from D-erythrose 4-phosphate: step 5/5. Functionally, catalyzes the complicated ring closure reaction between the two acyclic compounds 1-deoxy-D-xylulose-5-phosphate (DXP) and 3-amino-2-oxopropyl phosphate (1-amino-acetone-3-phosphate or AAP) to form pyridoxine 5'-phosphate (PNP) and inorganic phosphate. The sequence is that of Pyridoxine 5'-phosphate synthase from Pseudoalteromonas translucida (strain TAC 125).